A 156-amino-acid chain; its full sequence is MRCPFCGSMDTRVLDSRPTLDGAAIRRRRECISCGRRFTTYERYEEAPVLVIKKDGRREKFDRNKIKNGMIKACEKRPVTYDQIEEAVNRICLKLREEGLFEVETKKIGELVMEELKKLDQVAYVRFASVYRDFREVDQFLEIVKELKREKEGEGK.

A zinc finger lies at 3–34 (CPFCGSMDTRVLDSRPTLDGAAIRRRRECISC). In terms of domain architecture, ATP-cone spans 49–139 (VLVIKKDGRR…VYRDFREVDQ (91 aa)).

This sequence belongs to the NrdR family. Requires Zn(2+) as cofactor.

Negatively regulates transcription of bacterial ribonucleotide reductase nrd genes and operons by binding to NrdR-boxes. The chain is Transcriptional repressor NrdR from Thermotoga neapolitana (strain ATCC 49049 / DSM 4359 / NBRC 107923 / NS-E).